Consider the following 896-residue polypeptide: Zinc finger protein 574 (896 aa).

2 C2H2-type zinc fingers span residues 16-38 and 76-98; these read YVCS…QNSH and YQCL…QELH. At Ser-113 the chain carries Phosphoserine. The C2H2-type 3 zinc-finger motif lies at 126 to 148; that stretch reads YECVDCKALFASQELWLNHRQTH. A Phosphoserine modification is found at Ser-164. The C2H2-type 4 zinc finger occupies 214 to 236; the sequence is YKCSECSQLFQLPADFLEHQATH. Residues 239-301 are disordered; the sequence is APVPESQEPA…RARRNNSGEA (63 aa). Residues 247–257 show a composition bias toward polar residues; the sequence is PALQQEVQASS. Residues 274 to 287 show a composition bias toward basic and acidic residues; the sequence is HSYELRNGEAIGRD. The residue at position 298 (Ser-298) is a Phosphoserine. C2H2-type zinc fingers lie at residues 309–331, 336–358, 364–386, and 392–413; these read LFCS…LRSH, FKCP…LGDH, FLCV…RRAH, and HSCP…RRTH. Residues 434–460 are disordered; sequence FPEPAPAETGEPEAPEPPVSEETSAGP. The segment at 466–489 adopts a C2H2-type 9 zinc-finger fold; sequence YRCLLCSREFGKALQLTRHQRFVH. A C2H2-type 10; degenerate zinc finger spans residues 495 to 517; sequence HKCSICGKMFKKKSHVRNHLRTH. C2H2-type zinc fingers lie at residues 523–545, 551–573, 579–601, and 607–630; these read FPCP…RLTH, YRCG…RLVH, YRCQ…RYHH, and YKCR…LVVH. The C2H2-type 15; degenerate zinc finger occupies 636–659; sequence HRCPSCGAAFPSSLRLREHRCAAA. The segment at 667–689 adopts a C2H2-type 16 zinc-finger fold; sequence FECGTCGKKVGSAARLQAHEAAH. A disordered region spans residues 687-733; it reads AAHAAAGPGEVLAKEPPAPRAPRATRAPVASPAALGSTATASPAAPA. Residues 707-732 show a composition bias toward low complexity; the sequence is APRATRAPVASPAALGSTATASPAAP. Ser-717 is subject to Phosphoserine. Thr-724 is modified (phosphothreonine). The residue at position 728 (Ser-728) is a Phosphoserine. 4 consecutive C2H2-type zinc fingers follow at residues 738-760, 766-788, 794-816, and 822-844; these read LECS…RRIH, YPCP…RRLH, FACE…RRIH, and YSCP…RKTH. Asymmetric dimethylarginine is present on Arg-832.

Belongs to the krueppel C2H2-type zinc-finger protein family.

The protein localises to the nucleus. In terms of biological role, may be involved in transcriptional regulation. This Homo sapiens (Human) protein is Zinc finger protein 574 (ZNF574).